A 465-amino-acid polypeptide reads, in one-letter code: Kinesin-like protein KIN-1 (465 aa).

The 332-residue stretch at 3–334 (NVTVCARFRP…LRFGMRAKHI (332 aa)) folds into the Kinesin motor domain. 87-94 (GQTGAGKT) contacts ATP. The interval 338 to 358 (PRASEVKSAKAQEEPSSVTKD) is disordered. The segment covering 341–358 (SEVKSAKAQEEPSSVTKD) has biased composition (basic and acidic residues). Residues 402–444 (VYEDIVSKTIQSLQQAVDELQQKVKKLEAENIGIQEQALRNHE) adopt a coiled-coil conformation.

Belongs to the TRAFAC class myosin-kinesin ATPase superfamily. Kinesin family. KIN-1 subfamily. As to quaternary structure, homodimer. Interacts with WIP1 and WIP2. In terms of tissue distribution, specifically expressed in ovules and anthers.

Kinesin-like motor protein that promotes synapsis and is required for proper crossover distribution in meiosis. Plays a role in the nuclear division cycles during megagametogenesis. This chain is Kinesin-like protein KIN-1, found in Arabidopsis thaliana (Mouse-ear cress).